A 400-amino-acid polypeptide reads, in one-letter code: S-adenosylmethionine synthase (400 aa).

ATP is bound at residue 136 to 141 (GTGSTD).

It belongs to the AdoMet synthase 2 family. Mg(2+) serves as cofactor.

It carries out the reaction L-methionine + ATP + H2O = S-adenosyl-L-methionine + phosphate + diphosphate. It participates in amino-acid biosynthesis; S-adenosyl-L-methionine biosynthesis; S-adenosyl-L-methionine from L-methionine: step 1/1. Its function is as follows. Catalyzes the formation of S-adenosylmethionine from methionine and ATP. The sequence is that of S-adenosylmethionine synthase from Methanoregula boonei (strain DSM 21154 / JCM 14090 / 6A8).